Consider the following 381-residue polypeptide: Spindlin interactor and repressor of chromatin-binding protein (381 aa).

The interval 42–73 (RVTQQEKTPPPRPSPLEAGSDGCEEPKQQVSW) is disordered. A Glycyl lysine isopeptide (Lys-Gly) (interchain with G-Cter in SUMO2) cross-link involves residue Lys48. Phosphoserine is present on residues Ser121 and Ser148. Disordered regions lie at residues 144 to 264 (AEQP…EVRH), 283 to 320 (QLRGPDSKDSPKDREVAEGGLPRAESPSPAPPPGLRGT), and 339 to 381 (LQDW…GNGV). Glycyl lysine isopeptide (Lys-Gly) (interchain with G-Cter in SUMO2) cross-links involve residues Lys189 and Lys220. The segment covering 218-228 (RWKEPPGEEPV) has biased composition (basic and acidic residues). Phosphoserine is present on residues Ser248 and Ser251. A compositionally biased stretch (basic and acidic residues) spans 287–299 (PDSKDSPKDREVA). Residues Lys290 and Lys294 each participate in a glycyl lysine isopeptide (Lys-Gly) (interchain with G-Cter in SUMO2) cross-link. Phosphoserine is present on residues Ser308 and Ser310. Lys374 participates in a covalent cross-link: Glycyl lysine isopeptide (Lys-Gly) (interchain with G-Cter in SUMO2).

Interacts with SPIN1, SPIN2A, SPIN2B, SPIN3 and SPIN4. Interacts with TCF7L2 in a SPIN1-dependent manner. Interacts with PARP1; promoting PARP1 ADP-ribosyltransferase activity.

The protein localises to the nucleus. It localises to the chromosome. In terms of biological role, chromatin protein that stabilizes SPIN1 and enhances its association with histone H3 trimethylated at both 'Lys-4' and 'Lys-9' (H3K4me3K9me3). Positively regulates poly-ADP-ribosylation in response to DNA damage; acts by facilitating PARP1 ADP-ribosyltransferase activity. The protein is Spindlin interactor and repressor of chromatin-binding protein of Homo sapiens (Human).